The primary structure comprises 717 residues: Polyribonucleotide nucleotidyltransferase (717 aa).

Mg(2+)-binding residues include Asp486 and Asp492. The region spanning Pro553 to Ile612 is the KH domain. One can recognise an S1 motif domain in the interval Gly622–Val715. The segment at Ser650 to Thr683 is disordered. Over residues Lys654 to His665 the composition is skewed to basic and acidic residues. The span at Ser666 to Arg675 shows a compositional bias: basic residues.

Belongs to the polyribonucleotide nucleotidyltransferase family. Mg(2+) is required as a cofactor.

It is found in the cytoplasm. The catalysed reaction is RNA(n+1) + phosphate = RNA(n) + a ribonucleoside 5'-diphosphate. Its function is as follows. Involved in mRNA degradation. Catalyzes the phosphorolysis of single-stranded polyribonucleotides processively in the 3'- to 5'-direction. This is Polyribonucleotide nucleotidyltransferase from Borrelia turicatae (strain 91E135).